The chain runs to 438 residues: Iroquois-class homeodomain protein IRX-6 (438 aa).

The homeobox DNA-binding region spans 143 to 205 (SAGRRKNATR…NARRRLKKEN (63 aa)). Disordered stretches follow at residues 205–270 (NKMT…EAAV) and 388–438 (PRDS…GAEG). Residues 214–223 (KGGEERKADS) show a composition bias toward basic and acidic residues. The segment covering 252 to 268 (LEDLEEEEEEEEAEEEA) has biased composition (acidic residues).

Belongs to the TALE/IRO homeobox family. Expressed in a subset of retinal ganglion cells and bipolar cells; including in type 2 and type 3a bipolar cells.

Its subcellular location is the nucleus. In terms of biological role, transcription factor. Binds to the iroquois binding site (IBS) motif of target genes to regulate gene expression; functions as a transcriptional activator or repressor. Modulates expression of RCVRN, VSX1, BHLHE22/BHLHB5 and TACR3/Nk3r. Required downstream of retinal bipolar cell specification for the terminal differentiation of type 2, type 3a and possibly type 6 bipolar cells. The polypeptide is Iroquois-class homeodomain protein IRX-6 (Irx6) (Mus musculus (Mouse)).